The sequence spans 548 residues: Membrane protein insertase YidC (548 aa).

Residues 6 to 26 (NLFLIAFLFVSFMIWQAWQTD) form a helical membrane-spanning segment. The tract at residues 30 to 53 (QPLQTQTTQNTTSAAGDAVNQGVP) is disordered. 4 helical membrane passes run 345-365 (KFLHGFIGNWGFSIIVITFIV), 420-440 (LGGCLPLVIQMPIFLALYYML), 458-478 (LAAQDPYYILPILMGVTMFFI), and 499-519 (PVIFTVFFLWFPSGLVLYYIV).

This sequence belongs to the OXA1/ALB3/YidC family. Type 1 subfamily. As to quaternary structure, interacts with the Sec translocase complex via SecD. Specifically interacts with transmembrane segments of nascent integral membrane proteins during membrane integration.

The protein resides in the cell inner membrane. In terms of biological role, required for the insertion and/or proper folding and/or complex formation of integral membrane proteins into the membrane. Involved in integration of membrane proteins that insert both dependently and independently of the Sec translocase complex, as well as at least some lipoproteins. Aids folding of multispanning membrane proteins. This Erwinia tasmaniensis (strain DSM 17950 / CFBP 7177 / CIP 109463 / NCPPB 4357 / Et1/99) protein is Membrane protein insertase YidC.